We begin with the raw amino-acid sequence, 230 residues long: MTDMNILDLFLKASLLVKLIMLILIGFSIASWAIIIQRTRILNAAAREAEAFEDKFWSGIELSRLYQESQGKRDNLTGSEQIFYSGFKEFVRLHRANSHAPEAVVEGASRAMRISMNRELENLETHIPFLGTVGSISPYIGLFGTVWGIMHAFIALGAVKQATLQMVAPGIAEALIATAIGLFAAIPAVMAYNRLNQRVNKLELNYDNFMEEFTAILHRQAFTVSESNKG.

A run of 3 helical transmembrane segments spans residues 16–36 (LVKL…AIII), 139–159 (YIGL…LGAV), and 171–191 (IAEA…AVMA).

The protein belongs to the ExbB/TolQ family. The Tol-Pal system is composed of five core proteins: the inner membrane proteins TolA, TolQ and TolR, the periplasmic protein TolB and the outer membrane protein Pal. They form a network linking the inner and outer membranes and the peptidoglycan layer.

It localises to the cell inner membrane. Functionally, part of the Tol-Pal system, which plays a role in outer membrane invagination during cell division and is important for maintaining outer membrane integrity. Required, with TolR, for the proton motive force-dependent activation of TolA and for TolA-Pal interaction. This chain is Tol-Pal system protein TolQ, found in Escherichia coli O157:H7.